The sequence spans 128 residues: Kinetoplast-associated protein 4 (128 aa).

Residues 1–10 (MLRFVPRRLA) constitute a propeptide that is removed on maturation. Residues 60-87 (AHPGFKRKEKEPKELKAAKAAKTSTPRA) form a disordered region. Residues 65–76 (KRKEKEPKELKA) are compositionally biased toward basic and acidic residues.

The protein belongs to the KAP family. As to quaternary structure, associates with the kinetoplast DNA network.

The protein resides in the mitochondrion matrix. Its subcellular location is the kinetoplast. Functionally, histone H1-like DNA-binding protein involved in the organization and segregation of kinetoplast DNA (kDNA). The mitochondrial DNA of kinetoplastid protozoa consists of about 5,000 minicircles and 20 to 30 maxicircles. These circular DNAs are held together by catenation into a highly organized compact disk structure referred to as a kinetoplast DNA (kDNA) network. Binds preferentially to a specific fragment of minicircle DNA and is able to compact kDNA networks through DNA charge neutralization and condensation. In Crithidia fasciculata, this protein is Kinetoplast-associated protein 4 (KAP4).